Reading from the N-terminus, the 468-residue chain is uncharacterized protein (468 aa).

The tract at residues Ala-447 to His-468 is disordered.

It belongs to the mycobacterial PPE family.

This is an uncharacterized protein from Mycobacterium tuberculosis (strain ATCC 25618 / H37Rv).